The primary structure comprises 348 residues: Protein pelota homolog (348 aa).

This sequence belongs to the eukaryotic release factor 1 family. Pelota subfamily. In terms of assembly, monomer. A divalent metal cation serves as cofactor.

It localises to the cytoplasm. Its function is as follows. May function in recognizing stalled ribosomes, interact with stem-loop structures in stalled mRNA molecules, and effect endonucleolytic cleavage of the mRNA. May play a role in the release non-functional ribosomes and degradation of damaged mRNAs. Has endoribonuclease activity. The sequence is that of Protein pelota homolog from Methanococcus aeolicus (strain ATCC BAA-1280 / DSM 17508 / OCM 812 / Nankai-3).